Here is a 461-residue protein sequence, read N- to C-terminus: Nuclear distribution protein PAC1 (461 aa).

Positions 9-41 (QAEELHKSIIAYLTANNLLDTANTLRAELNLNE) constitute a LisH domain. Positions 61–88 (TSVVRLQKKIMDLESRMSAMQAELDNAT) form a coiled coil. WD repeat units lie at residues 114 to 155 (SHRD…RTIK), 157 to 197 (HTRA…KNIR), 201 to 248 (GHDH…CLRT), 251 to 290 (GHTAWVRDVFPSPDGRFLLSTGDDSTARLWDISVSNPETK), 312 to 355 (QYLS…LLTL), 357 to 396 (GHDNWIRALAFHPGGKYLFSVSDDRTLRCWDLSQEGKCIK), 401 to 446 (AHER…IRCV), and 448 to 461 (ATGGVDMKLRIFAN).

It belongs to the WD repeat LIS1/nudF family. As to quaternary structure, self-associates. Interacts with NDL1 and dynein.

The protein resides in the cytoplasm. Its subcellular location is the cytoskeleton. It is found in the spindle pole. In terms of biological role, positively regulates the activity of the minus-end directed microtubule motor protein dynein. May enhance dynein-mediated microtubule sliding by targeting dynein to the microtubule plus end. Required for nuclear migration during vegetative growth as well as development. Required for retrograde early endosome (EE) transport from the hyphal tip. Required for localization of dynein to the mitotic spindle poles. Recruits additional proteins to the dynein complex at SPBs. In Arthroderma benhamiae (strain ATCC MYA-4681 / CBS 112371) (Trichophyton mentagrophytes), this protein is Nuclear distribution protein PAC1.